Reading from the N-terminus, the 382-residue chain is Inactive ubiquitin-specific protease 5 (382 aa).

In terms of domain architecture, DUSP spans 16-141 (VPAEEERALI…GGPTLPRKAI (126 aa)). Positions 323–382 (TGLLNLGNTCFMNSAIQCLVHTPEFARYFREDYHREINWQNPLGMVVSTLSTSMALKPYV) constitute a USP domain.

The protein belongs to the peptidase C19 family. Widely expressed with the highest expression in floral organs.

The protein resides in the cell membrane. Functionally, plays an important role in the development of floral organs and chloroplasts. Does not possess deubiquitinating enzyme activity in vitro. The sequence is that of Inactive ubiquitin-specific protease 5 from Oryza sativa subsp. japonica (Rice).